Here is an 894-residue protein sequence, read N- to C-terminus: Translation initiation factor IF-2 (894 aa).

A disordered region spans residues 52-301 (DRGAAPNKLT…RRPSTLTQGF (250 aa)). Polar residues predominate over residues 68–82 (STLNIPSTGGKSKSV). The segment covering 107-154 (EQARREAEELAQHQVQRDAEEKAKRAAEDKAKREAAEQAKRVAAESDK) has biased composition (basic and acidic residues). Residues 155-168 (LTNQQTNTMTKSPQ) are compositionally biased toward polar residues. 2 stretches are compositionally biased toward basic and acidic residues: residues 171–214 (EKAR…ERGG) and 237–254 (HARE…GDRR). The segment covering 255-269 (SRTRGGKATKQKKTS) has biased composition (basic residues). A compositionally biased stretch (basic and acidic residues) spans 270–283 (RLSESKADREEARA). In terms of domain architecture, tr-type G spans 393-562 (SRAPVVTIMG…LLQAEVLELK (170 aa)). Residues 402-409 (GHVDHGKT) are G1. 402 to 409 (GHVDHGKT) serves as a coordination point for GTP. Residues 427–431 (GITQH) are G2. Positions 448 to 451 (DTPG) are G3. GTP contacts are provided by residues 448 to 452 (DTPGH) and 502 to 505 (NKID). The interval 502–505 (NKID) is G4. The G5 stretch occupies residues 538 to 540 (SAK).

This sequence belongs to the TRAFAC class translation factor GTPase superfamily. Classic translation factor GTPase family. IF-2 subfamily.

The protein localises to the cytoplasm. Functionally, one of the essential components for the initiation of protein synthesis. Protects formylmethionyl-tRNA from spontaneous hydrolysis and promotes its binding to the 30S ribosomal subunits. Also involved in the hydrolysis of GTP during the formation of the 70S ribosomal complex. The protein is Translation initiation factor IF-2 of Sodalis glossinidius (strain morsitans).